A 333-amino-acid polypeptide reads, in one-letter code: Ribose-phosphate pyrophosphokinase (333 aa).

ATP is bound at residue 58 to 60 (DGE). Residues His151 and Asp190 each coordinate Mg(2+). Residue Lys214 is part of the active site. D-ribose 5-phosphate contacts are provided by residues Arg216, Asp240, and 244–248 (DTAGT).

This sequence belongs to the ribose-phosphate pyrophosphokinase family. Class I subfamily. Homohexamer. Mg(2+) serves as cofactor.

The protein localises to the cytoplasm. The enzyme catalyses D-ribose 5-phosphate + ATP = 5-phospho-alpha-D-ribose 1-diphosphate + AMP + H(+). The protein operates within metabolic intermediate biosynthesis; 5-phospho-alpha-D-ribose 1-diphosphate biosynthesis; 5-phospho-alpha-D-ribose 1-diphosphate from D-ribose 5-phosphate (route I): step 1/1. Involved in the biosynthesis of the central metabolite phospho-alpha-D-ribosyl-1-pyrophosphate (PRPP) via the transfer of pyrophosphoryl group from ATP to 1-hydroxyl of ribose-5-phosphate (Rib-5-P). In Synechocystis sp. (strain ATCC 27184 / PCC 6803 / Kazusa), this protein is Ribose-phosphate pyrophosphokinase.